The following is an 86-amino-acid chain: Neurotoxin LmNaTx34.2 (86 aa).

Positions 1 to 18 are cleaved as a signal peptide; the sequence is MKTLILVVIALMVIEVKS. The 67-residue stretch at 19–85 folds into the LCN-type CS-alpha/beta domain; the sequence is DGYLMVRAGR…IWTYEKNTCS (67 aa). 4 cysteine pairs are disulfide-bonded: C32/C84, C36/C57, C43/C64, and C47/C66.

It belongs to the long (4 C-C) scorpion toxin superfamily. Sodium channel inhibitor family. Beta subfamily. In terms of tissue distribution, expressed by the venom gland.

It localises to the secreted. Its function is as follows. Binds voltage-independently at site-4 of sodium channels (Nav) and shift the voltage of activation toward more negative potentials thereby affecting sodium channel activation and promoting spontaneous and repetitive firing. This Lychas mucronatus (Chinese swimming scorpion) protein is Neurotoxin LmNaTx34.2.